The sequence spans 309 residues: Postacrosomal sheath WW domain-binding protein (309 aa).

The GRAM domain occupies 45 to 87 (GRKTGTLFLTSYRVIFITSCSISDPMLSFMMPFDLMTNLTVEQ). 10 tandem repeats follow at residues 175-181 (YGAPPAG), 182-188 (YGAPPPG), 189-195 (YGAPPAG), 217-223 (YGAPPLG), 224-230 (YGAPPAG), 231-237 (YGAPPLG), 238-244 (YGAPPLG), 245-251 (YGTPPLG), 252-258 (YGAPPLG), and 259-265 (YGAPPAG). Residues 175–265 (YGAPPAGYGA…PLGYGAPPAG (91 aa)) form a 10 X 7 AA tandem repeat of Y-G-X-P-P-X-G region. The short motif at 186–189 (PPGY) is the PPxY motif element. The span at 251-272 (GYGAPPLGYGAPPAGNEGPPAG) shows a compositional bias: low complexity. A disordered region spans residues 251 to 309 (GYGAPPLGYGAPPAGNEGPPAGYRASPAGSGARPQESTAAQAPENEASLPSASSSQVHS). A compositionally biased stretch (polar residues) spans 298–309 (SLPSASSSQVHS).

Expressed in testis.

Functionally, may play a role in meiotic resumption and pronuclear formation, mediated by a WW domain-signaling pathway during fertilization. The sequence is that of Postacrosomal sheath WW domain-binding protein (WBP2NL) from Homo sapiens (Human).